The following is a 223-amino-acid chain: Putative NAD(P)H nitroreductase SAUSA300_2462 (223 aa).

This sequence belongs to the nitroreductase family. FMN serves as cofactor.

In Staphylococcus aureus (strain USA300), this protein is Putative NAD(P)H nitroreductase SAUSA300_2462.